We begin with the raw amino-acid sequence, 350 residues long: MKKTAIAIAVALAGFATVAQAAPKDNTWYAGAKLGWSQYHDTGFIHNDGPTHENQLGAGAFGGYQVNPYVGFEMGYDWLGRMPYKGDNTNGAYKAQGVQLTAKLGYPITDDLDVYTRLGGMVWRADTKSNVPGGASTKDHDTGVSPVFAGGIEYAITPEIATRLEYQWTNNIGDANTIGTRPDNGLLSVGVSYRFGQQEAAPVVAPAPAPAPEVQTKHFTLKSDVLFNFNKSTLKPEGQQALDQLYSQLSNLDPKDGSVVVLGFTDRIGSDAYNQGLSEKRAQSVVDYLISKGIPSDKISARGMGESNPVTGNTCDNVKPRAALIDCLAPDRRVEIEVKGVKDVVTQPQA.

Residues 1–21 (MKKTAIAIAVALAGFATVAQA) form the signal peptide. 8 beta stranded membrane-spanning segments follow: residues 27–37 (TWYAGAKLGWS), 55–66 (QLGAGAFGGYQV), 70–78 (VGFEMGYDW), 96–107 (QGVQLTAKLGYP), 112–120 (LDVYTRLGG), 146–155 (PVFAGGIEYA), 160–167 (IATRLEYQ), and 186–194 (LLSVGVSYR). Repeat copies occupy residues 205–206 (AP), 207–208 (AP), 209–210 (AP), and 211–212 (AP). Residues 205-212 (APAPAPAP) are 4 X 2 AA tandem repeats of A-P. An OmpA-like domain is found at 214–342 (VQTKHFTLKS…RVEIEVKGVK (129 aa)). A disulfide bridge connects residues cysteine 315 and cysteine 327.

This sequence belongs to the outer membrane OOP (TC 1.B.6) superfamily. OmpA family. In terms of assembly, monomer and homodimer.

The protein resides in the cell outer membrane. With TolR probably plays a role in maintaining the position of the peptidoglycan cell wall in the periplasm. Acts as a porin with low permeability that allows slow penetration of small solutes; an internal gate slows down solute passage. Functionally, required for conjugation with F-type plasmids; probably serves as the mating receptor on recipient cells. This chain is Outer membrane protein A, found in Salmonella typhi.